The primary structure comprises 804 residues: Elongation factor G, mitochondrial (804 aa).

The transit peptide at 1-63 (MSMHRVARAV…RHFFQSPIIR (63 aa)) directs the protein to the mitochondrion. The 287-residue stretch at 99-385 (RRVRNIGIAA…AVCDYLPNPA (287 aa)) folds into the tr-type G domain. Residues 108-115 (AHIDSGKT), 183-187 (DTPGH), and 237-240 (NKMD) contribute to the GTP site.

It belongs to the TRAFAC class translation factor GTPase superfamily. Classic translation factor GTPase family. EF-G/EF-2 subfamily.

The protein localises to the mitochondrion. It participates in protein biosynthesis; polypeptide chain elongation. Mitochondrial GTPase that catalyzes the GTP-dependent ribosomal translocation step during translation elongation. During this step, the ribosome changes from the pre-translocational (PRE) to the post-translocational (POST) state as the newly formed A-site-bound peptidyl-tRNA and P-site-bound deacylated tRNA move to the P and E sites, respectively. Catalyzes the coordinated movement of the two tRNA molecules, the mRNA and conformational changes in the ribosome. The chain is Elongation factor G, mitochondrial (mef1) from Sclerotinia sclerotiorum (strain ATCC 18683 / 1980 / Ss-1) (White mold).